Reading from the N-terminus, the 864-residue chain is Arf-GAP with GTPase, ANK repeat and PH domain-containing protein 1 (864 aa).

The tract at residues 66–276 (SRSVPELKVG…QTSNGGGSLS (211 aa)) is small GTPase-like. Residues 67 to 241 (RSVPELKVGI…TRKKQQLSIG (175 aa)) form the GLD domain. GTP contacts are provided by residues 78–85 (GNLASGKS), 122–126 (IRDEG), and 178–181 (TQDA). Disordered stretches follow at residues 266 to 343 (SQTS…IGSG), 405 to 455 (VPGK…QMAS), and 499 to 549 (TGLG…LSST). The segment covering 275–289 (LSDYSSSVPSTPSTS) has biased composition (low complexity). Residues 322-337 (KGSDPDKDKKGLESRA) are compositionally biased toward basic and acidic residues. One can recognise a PH domain in the interval 346–591 (IPIKQGMLLK…WVQAIESQIL (246 aa)). Residues 413–428 (ATSSCAPVASPKTNGL) are compositionally biased toward polar residues. A compositionally biased stretch (low complexity) spans 507–517 (SSPSISSTTSP). A compositionally biased stretch (basic residues) spans 527–537 (ANRKKHRRKKS). A compositionally biased stretch (polar residues) spans 538–549 (TSNFKVDGLSST). In terms of domain architecture, Arf-GAP spans 612–732 (ALALQSIRNL…LFLSPLPCRD (121 aa)). The segment at 627 to 650 (CVDCDAQSPDWASLNLGALMCIEC) adopts a C4-type zinc-finger fold. ANK repeat units follow at residues 771–800 (DRRT…DVMA) and 804–833 (HGNT…PDEQ). A compositionally biased stretch (low complexity) spans 845–854 (KNNRNNNSNA). The tract at residues 845 to 864 (KNNRNNNSNAGGSGLMPTLI) is disordered.

Belongs to the centaurin gamma-like family. As to quaternary structure, homodimer. Interacts with several subunits of the AP-3 protein complex.

It is found in the cytoplasm. In terms of biological role, GTPase-activating protein. Directly and specifically regulates the adapter protein 3 (AP-3)-dependent trafficking of proteins in the endosomal-lysosomal system. The sequence is that of Arf-GAP with GTPase, ANK repeat and PH domain-containing protein 1 (agap1) from Xenopus laevis (African clawed frog).